We begin with the raw amino-acid sequence, 377 residues long: Cytochrome c peroxidase, mitochondrial (377 aa).

A mitochondrion-targeting transit peptide spans 1 to 32 (MSFRAPNLIRSTVGRRAGQTLNLRSQVIRRRF). The active-site Proton acceptor is the His-138. Residue His-261 participates in heme b binding. Catalysis depends on Trp-277, which acts as the Tryptophan radical intermediate.

Belongs to the peroxidase family. Cytochrome c peroxidase subfamily. As to quaternary structure, forms a one-to-one complex with cytochrome c. Interacts with MID1 (via C-terminus); the interaction may contribute to cellular detoxification of radicals. It depends on heme b as a cofactor.

It is found in the mitochondrion matrix. The protein localises to the mitochondrion intermembrane space. It catalyses the reaction 2 Fe(II)-[cytochrome c] + H2O2 + 2 H(+) = 2 Fe(III)-[cytochrome c] + 2 H2O. Destroys radicals which are normally produced within the cells and which are toxic to biological systems. This is Cytochrome c peroxidase, mitochondrial (CCP1) from Cryptococcus neoformans var. grubii serotype A (strain H99 / ATCC 208821 / CBS 10515 / FGSC 9487) (Filobasidiella neoformans var. grubii).